A 364-amino-acid chain; its full sequence is Spermidine/putrescine import ATP-binding protein PotA (364 aa).

The ABC transporter domain maps to Ile-6–Ile-236. Gly-38–Thr-45 is a binding site for ATP.

It belongs to the ABC transporter superfamily. Spermidine/putrescine importer (TC 3.A.1.11.1) family. In terms of assembly, the complex is composed of two ATP-binding proteins (PotA), two transmembrane proteins (PotB and PotC) and a solute-binding protein (PotD).

It localises to the cell inner membrane. The catalysed reaction is ATP + H2O + polyamine-[polyamine-binding protein]Side 1 = ADP + phosphate + polyamineSide 2 + [polyamine-binding protein]Side 1.. Functionally, part of the ABC transporter complex PotABCD involved in spermidine/putrescine import. Responsible for energy coupling to the transport system. This is Spermidine/putrescine import ATP-binding protein PotA from Legionella pneumophila subsp. pneumophila (strain Philadelphia 1 / ATCC 33152 / DSM 7513).